The following is a 253-amino-acid chain: MTDCVFITGATSGFGRAAAHRFAAAGWSLVLTGRRLERLEALKEELQGRVPVHIIALDVRDSDVVDAAVAALPEGFTRVRTLLNNAGLALAPQSAQHTDRSDWHTMIDTNVTGLVNVTHALLPTLIDVGEGATIVNVGSIAGQWPYPGSHVYGASKAFVKQFSYNLRCDLLGTGVRVTDLAPGIAETEFTLVRTGGDQAASDALYRGTTALTAEDIAEQMFYIATLPPHVNFNRLEVMPTRQAWSAFAIDYDA.

6-30 (FITGATSGFGRAAAHRFAAAGWSLV) provides a ligand contact to NADP(+). Substrate is bound at residue serine 139. Tyrosine 152 acts as the Proton acceptor in catalysis.

The protein belongs to the short-chain dehydrogenases/reductases (SDR) family. As to quaternary structure, homodimer and heterotetramer.

The catalysed reaction is 2-hydroxyethane-1-sulfonate + NADP(+) = sulfoacetaldehyde + NADPH + H(+). It functions in the pathway organosulfur degradation. In terms of biological role, catalyzes the formation of isethionate from 2-sulfoacetaldehyde in the deaminative pathway of taurine. The enzyme is specific for NADPH; NADH is not a substrate. Responsible for most of the activity observed in taurine-grown cells. The polypeptide is Sulfoacetaldehyde reductase (isfD) (Chromohalobacter salexigens (strain ATCC BAA-138 / DSM 3043 / CIP 106854 / NCIMB 13768 / 1H11)).